The chain runs to 376 residues: Succinyl-diaminopimelate desuccinylase (376 aa).

Zn(2+) is bound at residue histidine 66. Aspartate 68 is an active-site residue. Residue aspartate 99 coordinates Zn(2+). Glutamate 133 (proton acceptor) is an active-site residue. Glutamate 134, glutamate 162, and histidine 349 together coordinate Zn(2+).

The protein belongs to the peptidase M20A family. DapE subfamily. As to quaternary structure, homodimer. The cofactor is Zn(2+). Co(2+) serves as cofactor.

The catalysed reaction is N-succinyl-(2S,6S)-2,6-diaminopimelate + H2O = (2S,6S)-2,6-diaminopimelate + succinate. It participates in amino-acid biosynthesis; L-lysine biosynthesis via DAP pathway; LL-2,6-diaminopimelate from (S)-tetrahydrodipicolinate (succinylase route): step 3/3. Functionally, catalyzes the hydrolysis of N-succinyl-L,L-diaminopimelic acid (SDAP), forming succinate and LL-2,6-diaminopimelate (DAP), an intermediate involved in the bacterial biosynthesis of lysine and meso-diaminopimelic acid, an essential component of bacterial cell walls. The polypeptide is Succinyl-diaminopimelate desuccinylase (Buchnera aphidicola subsp. Cinara cedri (strain Cc)).